The sequence spans 481 residues: DNA primase DnaG (481 aa).

The 75-residue stretch at 169–243 (DAILVVEGRA…DVDYVARAPD (75 aa)) folds into the Toprim domain. The Mg(2+) site is built by glutamate 175, aspartate 217, and aspartate 219. The interval 275–393 (RRRNKLAAQA…ARKEREPSEF (119 aa)) is disordered. The span at 281 to 309 (AAQAAEKQAQAEAAQKAEAPAAAAPVQPQ) shows a compositional bias: low complexity. Over residues 312–393 (YQQKEYPQRE…ARKEREPSEF (82 aa)) the composition is skewed to basic and acidic residues.

It belongs to the archaeal DnaG primase family. Forms a ternary complex with MCM helicase and DNA. Component of the archaeal exosome complex. Mg(2+) is required as a cofactor.

The catalysed reaction is ssDNA + n NTP = ssDNA/pppN(pN)n-1 hybrid + (n-1) diphosphate.. RNA polymerase that catalyzes the synthesis of short RNA molecules used as primers for DNA polymerase during DNA replication. Also part of the exosome, which is a complex involved in RNA degradation. Acts as a poly(A)-binding protein that enhances the interaction between heteromeric, adenine-rich transcripts and the exosome. This Methanocella arvoryzae (strain DSM 22066 / NBRC 105507 / MRE50) protein is DNA primase DnaG.